The chain runs to 222 residues: Cytidylate kinase (222 aa).

Residue 11 to 19 coordinates ATP; it reads GPAGAGKST.

This sequence belongs to the cytidylate kinase family. Type 1 subfamily.

It localises to the cytoplasm. It carries out the reaction CMP + ATP = CDP + ADP. The enzyme catalyses dCMP + ATP = dCDP + ADP. The sequence is that of Cytidylate kinase from Desulforamulus reducens (strain ATCC BAA-1160 / DSM 100696 / MI-1) (Desulfotomaculum reducens).